The chain runs to 782 residues: Pyridoxal-dependent decarboxylase domain-containing protein 1 (782 aa).

Over residues 26–48 (ILEDNQRPSEEEKDGKKYTRKDI) the composition is skewed to basic and acidic residues. Disordered stretches follow at residues 26-56 (ILED…QGSG), 673-695 (QTTG…AGQK), 702-721 (RNSD…EVES), and 726-782 (PMPE…DSLR). Composition is skewed to polar residues over residues 703 to 714 (NSDAMSETSSIS) and 747 to 782 (AEQS…DSLR).

The protein belongs to the group II decarboxylase family. The cofactor is pyridoxal 5'-phosphate.

The protein is Pyridoxal-dependent decarboxylase domain-containing protein 1 (pdxdc1) of Xenopus laevis (African clawed frog).